The chain runs to 537 residues: Bifunctional purine biosynthesis protein PurH (537 aa).

One can recognise an MGS-like domain in the interval 11–158 (ADIQRVRRAL…KNHAYVGVIV (148 aa)).

The protein belongs to the PurH family.

The enzyme catalyses (6R)-10-formyltetrahydrofolate + 5-amino-1-(5-phospho-beta-D-ribosyl)imidazole-4-carboxamide = 5-formamido-1-(5-phospho-D-ribosyl)imidazole-4-carboxamide + (6S)-5,6,7,8-tetrahydrofolate. It catalyses the reaction IMP + H2O = 5-formamido-1-(5-phospho-D-ribosyl)imidazole-4-carboxamide. The protein operates within purine metabolism; IMP biosynthesis via de novo pathway; 5-formamido-1-(5-phospho-D-ribosyl)imidazole-4-carboxamide from 5-amino-1-(5-phospho-D-ribosyl)imidazole-4-carboxamide (10-formyl THF route): step 1/1. Its pathway is purine metabolism; IMP biosynthesis via de novo pathway; IMP from 5-formamido-1-(5-phospho-D-ribosyl)imidazole-4-carboxamide: step 1/1. The protein is Bifunctional purine biosynthesis protein PurH of Parvibaculum lavamentivorans (strain DS-1 / DSM 13023 / NCIMB 13966).